Consider the following 85-residue polypeptide: MQCLVIYDIPNDRARQRVADACLDYGLQRIQYSAFAGNLSRTHQRALFGEITRRVKGHTANVQLFVFDSKTWSDRRILEQQYDDA.

Asp8 is a binding site for Mg(2+).

The protein belongs to the CRISPR-associated endoribonuclease Cas2 protein family. In terms of assembly, homodimer, forms a heterotetramer with a Cas1 homodimer. Mg(2+) serves as cofactor.

In terms of biological role, CRISPR (clustered regularly interspaced short palindromic repeat), is an adaptive immune system that provides protection against mobile genetic elements (viruses, transposable elements and conjugative plasmids). CRISPR clusters contain sequences complementary to antecedent mobile elements and target invading nucleic acids. CRISPR clusters are transcribed and processed into CRISPR RNA (crRNA). Functions as a ssRNA-specific endoribonuclease. Involved in the integration of spacer DNA into the CRISPR cassette. This chain is CRISPR-associated endoribonuclease Cas2 2, found in Chloroflexus aurantiacus (strain ATCC 29366 / DSM 635 / J-10-fl).